The following is a 117-amino-acid chain: Ribosome-binding factor A (117 aa).

Belongs to the RbfA family. Monomer. Binds 30S ribosomal subunits, but not 50S ribosomal subunits or 70S ribosomes.

It is found in the cytoplasm. Functionally, one of several proteins that assist in the late maturation steps of the functional core of the 30S ribosomal subunit. Associates with free 30S ribosomal subunits (but not with 30S subunits that are part of 70S ribosomes or polysomes). Required for efficient processing of 16S rRNA. May interact with the 5'-terminal helix region of 16S rRNA. In Nitrosomonas eutropha (strain DSM 101675 / C91 / Nm57), this protein is Ribosome-binding factor A.